The primary structure comprises 509 residues: Anaerobic nitric oxide reductase flavorubredoxin (509 aa).

The interval 30 to 210 (LQGSSYNSYL…PFSRLVTAKI (181 aa)) is zinc metallo-hydrolase. Fe cation contacts are provided by H79, E81, D83, H147, D166, and H227. The Flavodoxin-like domain maps to 254-393 (ITLFYDTMSN…VCREHGREIA (140 aa)). FMN-binding positions include 260–264 (TMSNN) and 342–369 (AFGS…ETTL). The 52-residue stretch at 457–508 (SGCMQCSVCQWIYDPALGEPMQDVTPGTMWSDVPDSFLCPECGLGKDVFNPI) folds into the Rubredoxin-like domain. Fe cation contacts are provided by C462, C465, C495, and C498.

This sequence in the N-terminal section; belongs to the zinc metallo-hydrolase group 3 family. Homotetramer. Fe cation serves as cofactor. Requires FMN as cofactor.

Its subcellular location is the cytoplasm. It participates in nitrogen metabolism; nitric oxide reduction. Its function is as follows. Anaerobic nitric oxide reductase; uses NADH to detoxify nitric oxide (NO), protecting several 4Fe-4S NO-sensitive enzymes. Has at least 2 reductase partners, only one of which (NorW, flavorubredoxin reductase) has been identified. NO probably binds to the di-iron center; electrons enter from the NorW at rubredoxin and are transferred sequentially to the FMN center and the di-iron center. Also able to function as an aerobic oxygen reductase. This Pectobacterium atrosepticum (strain SCRI 1043 / ATCC BAA-672) (Erwinia carotovora subsp. atroseptica) protein is Anaerobic nitric oxide reductase flavorubredoxin.